Consider the following 182-residue polypeptide: Large ribosomal subunit protein uL15 (182 aa).

Residues 1-52 form a disordered region; it reads MDLSSLRPAKGAVKNKKRIGRGPGSGNGTTAGKGNKGQQSRSGYTRPVSEGG. Residues 21 to 35 are compositionally biased toward gly residues; that stretch reads RGPGSGNGTTAGKGN.

Belongs to the universal ribosomal protein uL15 family. Part of the 50S ribosomal subunit.

Binds to the 23S rRNA. This chain is Large ribosomal subunit protein uL15, found in Chlorobium phaeobacteroides (strain BS1).